Here is a 949-residue protein sequence, read N- to C-terminus: MAM domain-containing glycosylphosphatidylinositol anchor protein 2 (949 aa).

The signal sequence occupies residues 1–25; sequence MDLVYGLVWLLTVLLEGISGQGVYA. Ig-like domains are found at residues 27–127 and 134–232; these read PTVR…IRVD and PVVT…KMVS. Intrachain disulfides connect Cys62–Cys110 and Cys159–Cys216. 3 N-linked (GlcNAc...) asparagine glycosylation sites follow: Asn92, Asn213, and Asn237. Ig-like domains lie at 242–328, 340–436, 442–533, and 540–627; these read PSIK…NIIV, PDPY…VNIS, PNLT…ALVQ, and PAVE…FLVT. 2 disulfides stabilise this stretch: Cys264-Cys310 and Cys359-Cys417. N-linked (GlcNAc...) asparagine glycans are attached at residues Asn434, Asn443, Asn504, Asn610, and Asn703. Disulfide bonds link Cys465/Cys515 and Cys561/Cys611. A Fibronectin type-III domain is found at 638–738; it reads DTYNPVWQNR…TIRVIKYTGE (101 aa). Positions 739-914 constitute an MAM domain; it reads FHCGFEDGNI…VSIAEGECAK (176 aa). Asp924 carries GPI-anchor amidated aspartate lipidation. Residues 925–949 constitute a propeptide, removed in mature form; the sequence is GAVGILVHIWLFPVIILISILSPRR.

As to quaternary structure, interacts (through the Ig-like domains) with NLGN2. In terms of tissue distribution, expressed predominantly in neuronal tissue. Expressed in brain.

The protein localises to the cell membrane. Functionally, may be involved in cell-cell interactions. This Rattus norvegicus (Rat) protein is MAM domain-containing glycosylphosphatidylinositol anchor protein 2 (Mdga2).